The chain runs to 187 residues: Pyridoxal 5'-phosphate synthase subunit PdxT (187 aa).

Gly-47–Ser-49 lines the L-glutamine pocket. The active-site Nucleophile is Cys-76. Residues Arg-102 and Ile-128–Arg-129 each bind L-glutamine. Residues His-165 and Glu-167 each act as charge relay system in the active site.

The protein belongs to the glutaminase PdxT/SNO family. As to quaternary structure, in the presence of PdxS, forms a dodecamer of heterodimers. Only shows activity in the heterodimer.

The enzyme catalyses aldehydo-D-ribose 5-phosphate + D-glyceraldehyde 3-phosphate + L-glutamine = pyridoxal 5'-phosphate + L-glutamate + phosphate + 3 H2O + H(+). It carries out the reaction L-glutamine + H2O = L-glutamate + NH4(+). Its pathway is cofactor biosynthesis; pyridoxal 5'-phosphate biosynthesis. Functionally, catalyzes the hydrolysis of glutamine to glutamate and ammonia as part of the biosynthesis of pyridoxal 5'-phosphate. The resulting ammonia molecule is channeled to the active site of PdxS. This Methanococcus maripaludis (strain C7 / ATCC BAA-1331) protein is Pyridoxal 5'-phosphate synthase subunit PdxT.